Reading from the N-terminus, the 174-residue chain is Translation initiation factor IF-3 (174 aa).

Belongs to the IF-3 family. In terms of assembly, monomer.

The protein resides in the cytoplasm. In terms of biological role, IF-3 binds to the 30S ribosomal subunit and shifts the equilibrium between 70S ribosomes and their 50S and 30S subunits in favor of the free subunits, thus enhancing the availability of 30S subunits on which protein synthesis initiation begins. This is Translation initiation factor IF-3 from Xanthobacter autotrophicus (strain ATCC BAA-1158 / Py2).